The primary structure comprises 214 residues: Ceramide-1-phosphate transfer protein (214 aa).

An N-acylsphingoid base 1-phosphate is bound by residues Asp-56, Lys-60, Arg-106, Arg-110, and His-150.

The protein belongs to the GLTP family. Ubiquitous. Detected in heart, brain, placenta, lung, liver, skeletal muscle, kidney, pancreas, spleen, thymus, prostate, testis, ovary, small intestine, colon and peripheral blood leukocytes.

It localises to the cytoplasm. It is found in the cytosol. The protein localises to the golgi apparatus. Its subcellular location is the trans-Golgi network membrane. The protein resides in the cell membrane. It localises to the endosome membrane. It is found in the nucleus outer membrane. The enzyme catalyses N-(hexadecanoyl)-sphing-4-enine-1-phosphate(in) = N-(hexadecanoyl)-sphing-4-enine-1-phosphate(out). It carries out the reaction N-(9Z-octadecenoyl)-sphing-4-enine-1-phosphate(in) = N-(9Z-octadecenoyl)-sphing-4-enine-1-phosphate(out). Mediates the intracellular transfer of ceramide-1-phosphate (C1P) between organelle membranes and the cell membrane. Required for normal structure of the Golgi stacks. Can bind phosphoceramides with a variety of aliphatic chains, but has a preference for lipids with saturated C16:0 or monounsaturated C18:1 aliphatic chains, and is inefficient with phosphoceramides containing lignoceryl (C24:0). Plays a role in the regulation of the cellular levels of ceramide-1-phosphate, and thereby contributes to the regulation of phospholipase PLA2G4A activity and the release of arachidonic acid. Has no activity with galactosylceramide, lactosylceramide, sphingomyelin, phosphatidylcholine, phosphatidic acid and ceramide. C1P transfer is stimulated by phosphatidylserine in C1P source vesicles. Regulates autophagy, inflammasome mediated IL1B and IL18 processing, and pyroptosis, but not apoptosis. This chain is Ceramide-1-phosphate transfer protein, found in Homo sapiens (Human).